The following is a 201-amino-acid chain: Heat shock protein beta-1 (201 aa).

Serine 15 is modified (phosphoserine; by PKA and PKC). A sHSP domain is found at 83–193 (ALSRQMSSGM…SETTIPVNVE (111 aa)).

Belongs to the small heat shock protein (HSP20) family. Homooligomer. Homodimer; becomes monomeric upon activation. Heterooligomer.

Its subcellular location is the cytoplasm. The protein localises to the nucleus. It is found in the cytoskeleton. It localises to the spindle. Small heat shock protein which functions as a molecular chaperone probably maintaining denatured proteins in a folding-competent state. Plays a role in stress resistance and actin organization. The chain is Heat shock protein beta-1 (hspb1) from Poeciliopsis lucida (Desert topminnow).